The sequence spans 461 residues: Cyclic 2,3-diphosphoglycerate synthetase (461 aa).

Belongs to the cyclic 2,3-diphosphoglycerate synthetase family.

It localises to the cytoplasm. The enzyme catalyses (2R)-2,3-bisphosphoglycerate + ATP + H(+) = cyclic (2R)-2,3-bisphosphoglycerate + ADP + phosphate. Its function is as follows. Catalyzes the formation of cyclic 2,3-diphosphoglycerate (cDPG) by formation of an intramolecular phosphoanhydride bond at the expense of ATP. The polypeptide is Cyclic 2,3-diphosphoglycerate synthetase (Methanosphaera stadtmanae (strain ATCC 43021 / DSM 3091 / JCM 11832 / MCB-3)).